Reading from the N-terminus, the 33-residue chain is Gaegurin-1 (33 aa).

Cys-27 and Cys-33 form a disulfide bridge.

Belongs to the frog skin active peptide (FSAP) family. Brevinin subfamily. In terms of assembly, monomer. In terms of tissue distribution, expressed by the skin glands.

It localises to the secreted. Its function is as follows. Has a non-hemolytic activity. Has a broad spectrum of activity against both Gram-positive and Gram-negative bacteria, fungi and protozoa. This chain is Gaegurin-1 (GGN1), found in Glandirana rugosa (Japanese wrinkled frog).